Reading from the N-terminus, the 337-residue chain is HTH-type transcriptional regulator DegA (337 aa).

The HTH lacI-type domain maps to 1–57 (MKTTIYDVAKAAGVSITTVSRVINNTGRISDKTRQKVMNVMNEMAYTPNVHAAALTG). A DNA-binding region (H-T-H motif) is located at residues 5–24 (IYDVAKAAGVSITTVSRVIN). The disordered stretch occupies residues 300 to 319 (AERHRTAGRSNRGKRKAKQK).

Functionally, involved in the control of degradation of B.subtilis amidophosphoribosyltransferase (purF). Probably activates the gene for a degradative protease. The protein is HTH-type transcriptional regulator DegA (degA) of Bacillus subtilis (strain 168).